We begin with the raw amino-acid sequence, 684 residues long: Glycine--tRNA ligase beta subunit (684 aa).

The protein belongs to the class-II aminoacyl-tRNA synthetase family. Tetramer of two alpha and two beta subunits.

It localises to the cytoplasm. The enzyme catalyses tRNA(Gly) + glycine + ATP = glycyl-tRNA(Gly) + AMP + diphosphate. The protein is Glycine--tRNA ligase beta subunit of Pseudomonas fluorescens (strain ATCC BAA-477 / NRRL B-23932 / Pf-5).